The primary structure comprises 928 residues: Putative replication origin binding protein (928 aa).

The Helicase ATP-binding domain maps to asparagine 386 to alanine 516. Residue alanine 399–threonine 406 participates in ATP binding. The DEAD box signature appears at aspartate 484–aspartate 487.

It belongs to the herpesviridae oribp family.

In terms of biological role, displays bipolar ssDNA and dsDNA unwinding activities that require the same core catalytic residues for unwinding in either direction, the 3'-5' direction being more robust. The sequence is that of Putative replication origin binding protein from Escherichia coli (Enterobacteria phage T5).